The primary structure comprises 247 residues: Putative urease accessory protein UreD homolog (247 aa).

Belongs to the UreD family. As to quaternary structure, ureD, UreF and UreG form a complex that acts as a GTP-hydrolysis-dependent molecular chaperone, activating the urease apoprotein by helping to assemble the nickel containing metallocenter of UreC. The UreE protein probably delivers the nickel.

It localises to the cytoplasm. Its function is as follows. Required for maturation of urease via the functional incorporation of the urease nickel metallocenter. This is Putative urease accessory protein UreD homolog from Escherichia coli O157:H7.